Consider the following 216-residue polypeptide: GTP-binding nuclear protein Ran, testis-specific isoform (216 aa).

Ala2 bears the N-acetylalanine mark. A Small GTPase Ran-type domain is found at 7 to 171 (PQVQFKVVLV…FWLARKLIGD (165 aa)). Position 17–24 (17–24 (GDGGTGKT)) interacts with GTP. Thr24 bears the Phosphothreonine mark. Residues 37–45 (KEYVATLGV) are switch-I. Position 60 is an N6-acetyllysine (Lys60). 65–69 (DTAGQ) is a binding site for GTP. The segment at 68 to 84 (GQEKFGGLRDGYYIQAQ) is switch-II. At Lys71 the chain carries N6-acetyllysine; alternate. A Glycyl lysine isopeptide (Lys-Gly) (interchain with G-Cter in SUMO2); alternate cross-link involves residue Lys71. Lys71 participates in a covalent cross-link: Glycyl lysine isopeptide (Lys-Gly) (interchain with G-Cter in ubiquitin); alternate. The residue at position 99 (Lys99) is an N6-acetyllysine. Residue 122 to 125 (NKVD) participates in GTP binding. Lys134 is subject to N6-acetyllysine. Lys159 is subject to N6-acetyllysine; alternate. Lys159 is modified (N6-succinyllysine; alternate).

Belongs to the small GTPase superfamily. Ran family. In terms of tissue distribution, testis specific.

It localises to the nucleus. The enzyme catalyses GTP + H2O = GDP + phosphate + H(+). GTP-binding protein involved in nucleocytoplasmic transport. Required for the import of protein into the nucleus and also for RNA export. Involved in chromatin condensation and control of cell cycle. The chain is GTP-binding nuclear protein Ran, testis-specific isoform (Rasl2-9) from Mus musculus (Mouse).